Reading from the N-terminus, the 880-residue chain is Pyruvate, phosphate dikinase (880 aa).

The segment at 1–348 (MNKLIYYFGN…LYILQTRTAK (348 aa)) is N-terminal. R97 is a binding site for ATP. Residues 349 to 405 (RTAIAAINIAVQMVEEKLISKEQALMRIDPESLNQLLHTRIDYSKKLTAIAEGLPAS) form a linker 1 region. Residues 406-503 (PGAATGIVVF…VIKQGDIITI (98 aa)) form a central region. Position 458 is a phosphothreonine; by PDRP1 (T458). The active-site Tele-phosphohistidine intermediate is the H460. The tract at residues 504-538 (DGGSGKIFLGEMPLIQPTFSEESTLILDWADEISS) is linker 2. The tract at residues 539 to 879 (LKVRANAETV…AAAQAKIKQG (341 aa)) is C-terminal. Substrate is bound by residues R566, R622, E750, G771, T772, N773, and D774. Mg(2+) is bound at residue E750. D774 contacts Mg(2+). The Proton donor role is filled by C836.

The protein belongs to the PEP-utilizing enzyme family. As to quaternary structure, homodimer. Requires Mg(2+) as cofactor. In terms of processing, phosphorylation of Thr-458 in the dark inactivates the enzyme. Dephosphorylation upon light stimulation reactivates the enzyme.

It carries out the reaction pyruvate + phosphate + ATP = phosphoenolpyruvate + AMP + diphosphate + H(+). With respect to regulation, activated by light-induced dephosphorylation. Inhibited by dark-induced phosphorylation. Both reactions are catalyzed by PDRP1. Functionally, catalyzes the reversible phosphorylation of pyruvate and phosphate. This Rickettsia typhi (strain ATCC VR-144 / Wilmington) protein is Pyruvate, phosphate dikinase (ppdK).